Consider the following 327-residue polypeptide: DNA-directed RNA polymerase subunit alpha (327 aa).

The segment at 1 to 231 is alpha N-terminal domain (alpha-NTD); that stretch reads MIYQMQMPAK…DHIMYFANFS (231 aa). Positions 247-327 are alpha C-terminal domain (alpha-CTD); the sequence is DEFESMRKLL…GMDITRYQMK (81 aa).

It belongs to the RNA polymerase alpha chain family. As to quaternary structure, homodimer. The RNAP catalytic core consists of 2 alpha, 1 beta, 1 beta' and 1 omega subunit. When a sigma factor is associated with the core the holoenzyme is formed, which can initiate transcription.

It carries out the reaction RNA(n) + a ribonucleoside 5'-triphosphate = RNA(n+1) + diphosphate. DNA-dependent RNA polymerase catalyzes the transcription of DNA into RNA using the four ribonucleoside triphosphates as substrates. This chain is DNA-directed RNA polymerase subunit alpha, found in Chlorobium phaeobacteroides (strain DSM 266 / SMG 266 / 2430).